The chain runs to 35 residues: Photosystem II reaction center protein T (35 aa).

The helical transmembrane segment at 3 to 23 (ALVYTFLLVSTLGIIFFAIFF) threads the bilayer.

This sequence belongs to the PsbT family. As to quaternary structure, PSII is composed of 1 copy each of membrane proteins PsbA, PsbB, PsbC, PsbD, PsbE, PsbF, PsbH, PsbI, PsbJ, PsbK, PsbL, PsbM, PsbT, PsbY, PsbZ, Psb30/Ycf12, at least 3 peripheral proteins of the oxygen-evolving complex and a large number of cofactors. It forms dimeric complexes.

The protein localises to the plastid. It is found in the chloroplast thylakoid membrane. Functionally, found at the monomer-monomer interface of the photosystem II (PS II) dimer, plays a role in assembly and dimerization of PSII. PSII is a light-driven water plastoquinone oxidoreductase, using light energy to abstract electrons from H(2)O, generating a proton gradient subsequently used for ATP formation. This is Photosystem II reaction center protein T from Saururus cernuus (Lizard's tail).